Reading from the N-terminus, the 169-residue chain is Peptide methionine sulfoxide reductase MsrA (169 aa).

Cysteine 10 is an active-site residue.

The protein belongs to the MsrA Met sulfoxide reductase family.

It catalyses the reaction L-methionyl-[protein] + [thioredoxin]-disulfide + H2O = L-methionyl-(S)-S-oxide-[protein] + [thioredoxin]-dithiol. The catalysed reaction is [thioredoxin]-disulfide + L-methionine + H2O = L-methionine (S)-S-oxide + [thioredoxin]-dithiol. Its function is as follows. Has an important function as a repair enzyme for proteins that have been inactivated by oxidation. Catalyzes the reversible oxidation-reduction of methionine sulfoxide in proteins to methionine. This Streptococcus agalactiae serotype III (strain NEM316) protein is Peptide methionine sulfoxide reductase MsrA.